The following is a 130-amino-acid chain: Small ribosomal subunit protein eS6 (130 aa).

This sequence belongs to the eukaryotic ribosomal protein eS6 family.

The sequence is that of Small ribosomal subunit protein eS6 from Methanosphaera stadtmanae (strain ATCC 43021 / DSM 3091 / JCM 11832 / MCB-3).